Consider the following 86-residue polypeptide: Synergistic-like venom protein (86 aa).

An N-terminal signal peptide occupies residues 1-21 (MKTLLLTLVVVTIVCLDLGYT). 4 disulfides stabilise this stretch: Cys-24–Cys-45, Cys-38–Cys-63, Cys-67–Cys-78, and Cys-79–Cys-84.

This sequence belongs to the three-finger toxin family. Short-chain subfamily. Aminergic toxin sub-subfamily. As to expression, expressed by the venom gland.

The protein localises to the secreted. The polypeptide is Synergistic-like venom protein (Dendroaspis angusticeps (Eastern green mamba)).